Reading from the N-terminus, the 407-residue chain is Protein COS9 (407 aa).

A run of 3 helical transmembrane segments spans residues 75-95 (TWLL…IKSI), 98-118 (IFPF…LPNI), and 261-281 (IFNL…YVSW).

It belongs to the DUP/COS family.

It is found in the membrane. This chain is Protein COS9 (COS9), found in Saccharomyces cerevisiae (strain ATCC 204508 / S288c) (Baker's yeast).